The primary structure comprises 329 residues: Sex comb on midleg-like protein 1 (329 aa).

Phosphoserine is present on residues Ser-138 and Ser-238. In terms of domain architecture, SAM spans 258-325; sequence WSVEAVVLFL…YYIDRLKQGK (68 aa).

It belongs to the SCM family.

It is found in the nucleus. Its function is as follows. Putative Polycomb group (PcG) protein. PcG proteins act by forming multiprotein complexes, which are required to maintain the transcriptionally repressive state of homeotic genes throughout development. May be involved in spermatogenesis during sexual maturation. In Nomascus leucogenys (Northern white-cheeked gibbon), this protein is Sex comb on midleg-like protein 1 (SCML1).